The chain runs to 568 residues: Proline--tRNA ligase (568 aa).

It belongs to the class-II aminoacyl-tRNA synthetase family. ProS type 1 subfamily. Homodimer.

It is found in the cytoplasm. The enzyme catalyses tRNA(Pro) + L-proline + ATP = L-prolyl-tRNA(Pro) + AMP + diphosphate. In terms of biological role, catalyzes the attachment of proline to tRNA(Pro) in a two-step reaction: proline is first activated by ATP to form Pro-AMP and then transferred to the acceptor end of tRNA(Pro). As ProRS can inadvertently accommodate and process non-cognate amino acids such as alanine and cysteine, to avoid such errors it has two additional distinct editing activities against alanine. One activity is designated as 'pretransfer' editing and involves the tRNA(Pro)-independent hydrolysis of activated Ala-AMP. The other activity is designated 'posttransfer' editing and involves deacylation of mischarged Ala-tRNA(Pro). The misacylated Cys-tRNA(Pro) is not edited by ProRS. The sequence is that of Proline--tRNA ligase from Lysinibacillus sphaericus (strain C3-41).